Consider the following 274-residue polypeptide: Nickel/cobalt efflux system RcnA (274 aa).

Over 1–12 the chain is Periplasmic; it reads MTEFTTLLQQGN. A helical membrane pass occupies residues 13-33; the sequence is AWFFIPSAILLGALHGLEPGH. Residues 34–56 lie on the Cytoplasmic side of the membrane; that stretch reads SKTMMAAFIIAIKGTIKQAVMLG. A helical transmembrane segment spans residues 57–77; that stretch reads LAATISHTAVVWLIAFGGMVI. Topologically, residues 78–86 are periplasmic; that stretch reads SKRFTAQSA. The chain crosses the membrane as a helical span at residues 87–107; the sequence is EPWLQLISAVIIISTAFWMFW. Over 108-174 the chain is Cytoplasmic; sequence RTWRGERNWL…FDGREVTNWQ (67 aa). Positions 127-137 are enriched in basic and acidic residues; it reads HHHHDHEDHHD. Residues 127-153 form a disordered region; the sequence is HHHHDHEDHHDHGHHHHHEHGEYQDAH. The chain crosses the membrane as a helical span at residues 175–195; it reads ILLFGLTGGLIPCPAAITVLL. The Periplasmic portion of the chain corresponds to 196-209; it reads ICIQLKALTLGATL. A helical transmembrane segment spans residues 210-230; it reads VVSFSLGLALTLVTVSVGAAI. Residues 231–251 are Cytoplasmic-facing; that stretch reads SVQQVAKRWSGFNTLAKRAPY. A helical membrane pass occupies residues 252–272; the sequence is FSSLLIGLVGVYMGVHGFMGI. The Periplasmic portion of the chain corresponds to 273–274; it reads MR.

The protein belongs to the NiCoT transporter (TC 2.A.52) family. RcnA subfamily.

It localises to the cell inner membrane. Efflux system for nickel and cobalt. This Escherichia coli O6:K15:H31 (strain 536 / UPEC) protein is Nickel/cobalt efflux system RcnA (rcnA).